The primary structure comprises 453 residues: Secreted triacylglycerol lipase LIP3 (453 aa).

The first 19 residues, 1-19, serve as a signal peptide directing secretion; the sequence is MKLGIVAFTLISFAAQALA. An N-linked (GlcNAc...) asparagine glycan is attached at asparagine 98. Cysteines 115 and 284 form a disulfide. The active-site Nucleophile is serine 197. An N-linked (GlcNAc...) asparagine glycan is attached at asparagine 230. Active-site residues include aspartate 344 and histidine 378. A disulfide bond links cysteine 360 and cysteine 406.

It belongs to the AB hydrolase superfamily. Lipase family. Class Lip subfamily.

The protein resides in the secreted. It is found in the cell wall. The catalysed reaction is a triacylglycerol + H2O = a diacylglycerol + a fatty acid + H(+). It carries out the reaction a monoacylglycerol + H2O = glycerol + a fatty acid + H(+). It catalyses the reaction a diacylglycerol + H2O = a monoacylglycerol + a fatty acid + H(+). In terms of biological role, secreted lipase involved in Dandruff and seborrheic dermatitis (D/SD) probably via lipase-mediated breakdown of sebaceous lipids and release of irritating free fatty acids. Has triacylglycerol lipase activity and is able to hydrolyze triolein, tristearin, trilinolein, tripalmitoylglycerol and trihexadecenoin. Hydrolyzes diacylglycerols such as distearin, dilinolein, dipalmitoylglycerol and dipalmitolein. Mostly converts monoolein to di- and triolein, while free fatty acids are only produced in low amounts. The sequence is that of Secreted triacylglycerol lipase LIP3 from Malassezia globosa (strain ATCC MYA-4612 / CBS 7966) (Dandruff-associated fungus).